The following is a 311-amino-acid chain: MKKIPLIILTGPTAVGKTDLSIKLAKDMNAEIISADSMQIYEYMDIGSAKVTEKEMQGVKHYLIDEVKPDYPFSVSEFQQRAKKYIHEINKKEKCVLVTGGTGLYLNSLIYNMDFAQSDANNELREELQKQLAEKGIDYMHNKLKELDEESANRIHKNNTKRVIRALEVCLSGKKMNDFSSDLKFNEEYQPIIIVLNRDREHLYQRINMRVDIMIKNGLVEEVKKLLSMGFKKDMISMQGIGYKEILKYLDGEYTYEEAIEIIKRDSRRYAKRQITWFKRYKTAKWFDLDQYENIDELKNEIILYIKDSIK.

G11–T18 provides a ligand contact to ATP. Substrate is bound at residue T13–T18. Residues D36–Q39 are interaction with substrate tRNA.

Belongs to the IPP transferase family. Monomer. Mg(2+) serves as cofactor.

It catalyses the reaction adenosine(37) in tRNA + dimethylallyl diphosphate = N(6)-dimethylallyladenosine(37) in tRNA + diphosphate. In terms of biological role, catalyzes the transfer of a dimethylallyl group onto the adenine at position 37 in tRNAs that read codons beginning with uridine, leading to the formation of N6-(dimethylallyl)adenosine (i(6)A). The chain is tRNA dimethylallyltransferase from Clostridioides difficile (strain 630) (Peptoclostridium difficile).